The following is a 176-amino-acid chain: MSAGGASVPPPPNPAVSFPVPRVTLPAGPDILRTYSGAFVCLEILFGGLVWILVASSNVPLPLLQGWVMFVSVTAFFFSLLFLGLFLSGMVTQIDANWNFLDFAYHFTVFVFYFGAFLLEAAATSLHDLHYNITMTGQPLLNDNQYNINVAASIFAFMTTACYGCSLGLALRRWRP.

The Cytoplasmic segment spans residues 1-34 (MSAGGASVPPPPNPAVSFPVPRVTLPAGPDILRT). The 145-residue stretch at 31–175 (ILRTYSGAFV…SLGLALRRWR (145 aa)) folds into the MARVEL domain. The helical transmembrane segment at 35 to 55 (YSGAFVCLEILFGGLVWILVA) threads the bilayer. At 56–66 (SSNVPLPLLQG) the chain is on the lumenal side. Residues 67–87 (WVMFVSVTAFFFSLLFLGLFL) traverse the membrane as a helical segment. The Cytoplasmic portion of the chain corresponds to 88-102 (SGMVTQIDANWNFLD). The chain crosses the membrane as a helical span at residues 103–123 (FAYHFTVFVFYFGAFLLEAAA). Topologically, residues 124–149 (TSLHDLHYNITMTGQPLLNDNQYNIN) are lumenal. N-linked (GlcNAc...) asparagine glycosylation is present at Asn132. The helical transmembrane segment at 150–170 (VAASIFAFMTTACYGCSLGLA) threads the bilayer. The Cytoplasmic segment spans residues 171 to 176 (LRRWRP).

Belongs to the MAL family. Interacts with TPD52L2.

It localises to the cell membrane. Its subcellular location is the apical cell membrane. In terms of biological role, member of the machinery of polarized transport. Required for the indirect transcytotic route at the step of the egress of the transcytosing cargo from perinuclear endosomes in order for it to travel to the apical surface via a raft-dependent pathway. In Pongo abelii (Sumatran orangutan), this protein is Protein MAL2 (MAL2).